Consider the following 602-residue polypeptide: Elongation factor 4 (602 aa).

The tr-type G domain maps to 6–188 (KYIRNFCIIA…AIIRRVPPPR (183 aa)). GTP is bound by residues 18–23 (DHGKST) and 135–138 (NKID).

It belongs to the TRAFAC class translation factor GTPase superfamily. Classic translation factor GTPase family. LepA subfamily.

It is found in the cell membrane. The catalysed reaction is GTP + H2O = GDP + phosphate + H(+). Functionally, required for accurate and efficient protein synthesis under certain stress conditions. May act as a fidelity factor of the translation reaction, by catalyzing a one-codon backward translocation of tRNAs on improperly translocated ribosomes. Back-translocation proceeds from a post-translocation (POST) complex to a pre-translocation (PRE) complex, thus giving elongation factor G a second chance to translocate the tRNAs correctly. Binds to ribosomes in a GTP-dependent manner. The polypeptide is Elongation factor 4 (Moorella thermoacetica (strain ATCC 39073 / JCM 9320)).